A 753-amino-acid chain; its full sequence is Cytoplasmic polyadenylation element-binding protein 3 (753 aa).

Positions 111-286 (VGESTPSSAG…NGSWHGELPP (176 aa)) are disordered. 2 stretches are compositionally biased toward basic and acidic residues: residues 131-142 (KPTEKISVDEPP) and 175-188 (FGKE…EVVK). The span at 227 to 239 (SPAKISSNSSSSS) shows a compositional bias: low complexity. A compositionally biased stretch (polar residues) spans 265–279 (SRQGLSNRDNLSNGS). The region spanning 298-320 (IFVGGVPWDITEAALKDSFGEFG) is the RRM domain. Positions 567-589 (KAYAGPHRRPHLTSNSLSKSHGC) are disordered. The span at 578 to 589 (LTSNSLSKSHGC) shows a compositional bias: polar residues.

In terms of biological role, cytoplasmic polyadenylation element binding protein that binds to and regulates the translation of specific mRNAs. The chain is Cytoplasmic polyadenylation element-binding protein 3 (cpb-3) from Caenorhabditis briggsae.